The chain runs to 438 residues: tRNA(Ile)-lysidine synthase (438 aa).

27–32 (SGGVDS) provides a ligand contact to ATP.

This sequence belongs to the tRNA(Ile)-lysidine synthase family.

The protein resides in the cytoplasm. It carries out the reaction cytidine(34) in tRNA(Ile2) + L-lysine + ATP = lysidine(34) in tRNA(Ile2) + AMP + diphosphate + H(+). Ligates lysine onto the cytidine present at position 34 of the AUA codon-specific tRNA(Ile) that contains the anticodon CAU, in an ATP-dependent manner. Cytidine is converted to lysidine, thus changing the amino acid specificity of the tRNA from methionine to isoleucine. The chain is tRNA(Ile)-lysidine synthase from Vibrio parahaemolyticus serotype O3:K6 (strain RIMD 2210633).